Reading from the N-terminus, the 230-residue chain is Heptaprenylglyceryl phosphate synthase (230 aa).

Lys12 is a sn-glycerol 1-phosphate binding site. Residues Asp14 and Thr40 each coordinate Mg(2+). Sn-glycerol 1-phosphate contacts are provided by residues 159–164 (YIEYSG), Gly189, and 209–210 (GD).

It belongs to the GGGP/HepGP synthase family. Group I subfamily. In terms of assembly, homodimer. Mg(2+) is required as a cofactor.

It carries out the reaction sn-glycerol 1-phosphate + all-trans-heptaprenyl diphosphate = 3-heptaprenyl-sn-glycero-1-phosphate + diphosphate. It participates in membrane lipid metabolism; glycerophospholipid metabolism. In terms of biological role, prenyltransferase that catalyzes in vivo the transfer of the heptaprenyl moiety of heptaprenyl pyrophosphate (HepPP; 35 carbon atoms) to the C3 hydroxyl of sn-glycerol-1-phosphate (G1P), producing heptaprenylglyceryl phosphate (HepGP). This reaction is an ether-bond-formation step in the biosynthesis of archaea-type G1P-based membrane lipids found in Bacillales. This chain is Heptaprenylglyceryl phosphate synthase, found in Staphylococcus aureus (strain Mu3 / ATCC 700698).